Here is a 260-residue protein sequence, read N- to C-terminus: MNILVLIKQVPDTNEVRIDPVTKTLIREGVPSIINPDDKNALEEAIRIREKVGGKVTVISMGPTQAEVALREALAMGADEAYLLTDRAFAGADTYATAKALSKAIEKFQYDIVFCGRQAIDGDTAQVGPQIAEQLDIPQVTYVRKVEIEGDKLIVERALEDGYEIIEVKTPVLLTAIKELNVPRYPSIKGIFNAYNKKEVKILTADDLEVDKNELGLKGSPTKVVATSTPNTERAGEIFTGNIKEAVQNLVERLNSRHVI.

This sequence belongs to the ETF beta-subunit/FixA family. Heterodimer of an alpha and a beta subunit. The cofactor is FAD. AMP is required as a cofactor.

Functionally, the electron transfer flavoprotein serves as a specific electron acceptor for other dehydrogenases. It transfers the electrons to the main respiratory chain via ETF-ubiquinone oxidoreductase (ETF dehydrogenase). In Thermoanaerobacterium thermosaccharolyticum (strain ATCC 7956 / DSM 571 / NCIMB 9385 / NCA 3814 / NCTC 13789 / WDCM 00135 / 2032) (Clostridium thermosaccharolyticum), this protein is Electron transfer flavoprotein subunit beta (etfB).